We begin with the raw amino-acid sequence, 65 residues long: Large ribosomal subunit protein bL33m (65 aa).

The transit peptide at 1–8 (MFLTTANL) directs the protein to the mitochondrion.

It belongs to the bacterial ribosomal protein bL33 family. Component of the mitochondrial ribosome large subunit (39S) which comprises a 16S rRNA and about 50 distinct proteins.

Its subcellular location is the mitochondrion. The chain is Large ribosomal subunit protein bL33m (mrpl33) from Tetraodon nigroviridis (Spotted green pufferfish).